A 428-amino-acid chain; its full sequence is Glutamate-1-semialdehyde 2,1-aminomutase (428 aa).

Lysine 265 carries the N6-(pyridoxal phosphate)lysine modification.

Belongs to the class-III pyridoxal-phosphate-dependent aminotransferase family. HemL subfamily. Homodimer. Requires pyridoxal 5'-phosphate as cofactor.

The protein localises to the cytoplasm. The enzyme catalyses (S)-4-amino-5-oxopentanoate = 5-aminolevulinate. It functions in the pathway porphyrin-containing compound metabolism; protoporphyrin-IX biosynthesis; 5-aminolevulinate from L-glutamyl-tRNA(Glu): step 2/2. The sequence is that of Glutamate-1-semialdehyde 2,1-aminomutase from Thioalkalivibrio sulfidiphilus (strain HL-EbGR7).